The primary structure comprises 124 residues: MADLAKIVEDLSALTVLEAAELSKLLEEKWGVSAAAPVAVAAAGGAAPAAAAEEKTEFDVVLADGGANKINVIKEVRALTGLGLKEAKDLVEGAPKAVKEGASKDEAEKIKAQLEAAGAKVELK.

This sequence belongs to the bacterial ribosomal protein bL12 family. Homodimer. Part of the ribosomal stalk of the 50S ribosomal subunit. Forms a multimeric L10(L12)X complex, where L10 forms an elongated spine to which 2 to 4 L12 dimers bind in a sequential fashion. Binds GTP-bound translation factors.

Forms part of the ribosomal stalk which helps the ribosome interact with GTP-bound translation factors. Is thus essential for accurate translation. This chain is Large ribosomal subunit protein bL12, found in Brucella abortus (strain S19).